The sequence spans 211 residues: Putative truncated flagellar export/assembly protein LafU (211 aa).

An OmpA-like domain is found at 58 to 176 (LRVLIKDDQN…RIEIMVLTKS (119 aa)).

It belongs to the MotB family.

The sequence is that of Putative truncated flagellar export/assembly protein LafU from Escherichia coli (strain K12).